A 143-amino-acid chain; its full sequence is 3-hydroxyacyl-[acyl-carrier-protein] dehydratase FabZ (143 aa).

The active site involves histidine 49.

It belongs to the thioester dehydratase family. FabZ subfamily.

The protein resides in the cytoplasm. The enzyme catalyses a (3R)-hydroxyacyl-[ACP] = a (2E)-enoyl-[ACP] + H2O. Functionally, involved in unsaturated fatty acids biosynthesis. Catalyzes the dehydration of short chain beta-hydroxyacyl-ACPs and long chain saturated and unsaturated beta-hydroxyacyl-ACPs. The chain is 3-hydroxyacyl-[acyl-carrier-protein] dehydratase FabZ from Wolbachia pipientis subsp. Culex pipiens (strain wPip).